Consider the following 233-residue polypeptide: Cytochrome c oxidase subunit 3 (233 aa).

4 helical membrane-spanning segments follow: residues 62–82, 98–118, 135–155, and 172–192; these read VVLF…AYLI, LELL…FVMH, WFGI…YEYF, and VLTG…LSVL.

It belongs to the cytochrome c oxidase subunit 3 family.

The protein localises to the cell membrane. The enzyme catalyses 4 Fe(II)-[cytochrome c] + O2 + 8 H(+)(in) = 4 Fe(III)-[cytochrome c] + 2 H2O + 4 H(+)(out). The chain is Cytochrome c oxidase subunit 3 (ctaE) from Synechocystis sp. (strain ATCC 27184 / PCC 6803 / Kazusa).